Reading from the N-terminus, the 102-residue chain is NADH-quinone oxidoreductase subunit K (102 aa).

3 consecutive transmembrane segments (helical) span residues 5–25 (LAHYLVLGAILFAIGIFGIFL), 31–51 (IILLMSIELVLLAVNMNFVAF), and 62–82 (VFVFFILTVAAAEAAIGLAIL).

The protein belongs to the complex I subunit 4L family. In terms of assembly, NDH-1 is composed of 14 different subunits. Subunits NuoA, H, J, K, L, M, N constitute the membrane sector of the complex.

The protein localises to the cell inner membrane. It carries out the reaction a quinone + NADH + 5 H(+)(in) = a quinol + NAD(+) + 4 H(+)(out). NDH-1 shuttles electrons from NADH, via FMN and iron-sulfur (Fe-S) centers, to quinones in the respiratory chain. The immediate electron acceptor for the enzyme in this species is believed to be ubiquinone. Couples the redox reaction to proton translocation (for every two electrons transferred, four hydrogen ions are translocated across the cytoplasmic membrane), and thus conserves the redox energy in a proton gradient. The protein is NADH-quinone oxidoreductase subunit K of Bordetella petrii (strain ATCC BAA-461 / DSM 12804 / CCUG 43448).